Consider the following 128-residue polypeptide: Probable 4-amino-4-deoxy-L-arabinose-phosphoundecaprenol flippase subunit ArnF (128 aa).

At Met-1 to Ser-10 the chain is on the cytoplasmic side. A helical membrane pass occupies residues Val-11–Leu-31. Over Ser-32–Gln-47 the chain is Periplasmic. The chain crosses the membrane as a helical span at residues Leu-48–Ala-68. At Leu-69–Ala-77 the chain is on the cytoplasmic side. The chain crosses the membrane as a helical span at residues Tyr-78–Phe-98. Residues Asn-99 to Pro-101 are Periplasmic-facing. The helical transmembrane segment at Ala-102–Ile-122 threads the bilayer. The Cytoplasmic portion of the chain corresponds to Lys-123–Ser-128.

Belongs to the ArnF family. In terms of assembly, heterodimer of ArnE and ArnF.

It is found in the cell inner membrane. It participates in bacterial outer membrane biogenesis; lipopolysaccharide biosynthesis. In terms of biological role, translocates 4-amino-4-deoxy-L-arabinose-phosphoundecaprenol (alpha-L-Ara4N-phosphoundecaprenol) from the cytoplasmic to the periplasmic side of the inner membrane. This chain is Probable 4-amino-4-deoxy-L-arabinose-phosphoundecaprenol flippase subunit ArnF, found in Yersinia pseudotuberculosis serotype O:1b (strain IP 31758).